Consider the following 146-residue polypeptide: Hemoglobin subunit beta (146 aa).

Valine 1 is subject to N-acetylvaline. The region spanning 2-146 is the Globin domain; it reads HLTGEEKSLV…VANALAHKYH (145 aa). Position 12 is a phosphothreonine (threonine 12). Phosphoserine is present on serine 44. Lysine 59 carries the N6-acetyllysine modification. Histidine 63 lines the heme b pocket. Lysine 82 is modified (N6-acetyllysine). Histidine 92 is a binding site for heme b. Cysteine 93 is subject to S-nitrosocysteine. An N6-acetyllysine modification is found at lysine 144.

Belongs to the globin family. In terms of assembly, heterotetramer of two alpha chains and two beta chains. In terms of tissue distribution, red blood cells.

Functionally, involved in oxygen transport from the lung to the various peripheral tissues. The chain is Hemoglobin subunit beta (HBB) from Ursus maritimus (Polar bear).